Here is a 277-residue protein sequence, read N- to C-terminus: Hemin import ATP-binding protein HmuV (277 aa).

The ABC transporter domain maps to 25-260 (IHAQGLNLIL…DIIERVYGWP (236 aa)). 57–64 (GPNGAGKS) serves as a coordination point for ATP.

Belongs to the ABC transporter superfamily. Heme (hemin) importer (TC 3.A.1.14.5) family. As to quaternary structure, the complex is composed of two ATP-binding proteins (HmuV), two transmembrane proteins (HmuU) and a solute-binding protein (HmuT).

The protein localises to the cell inner membrane. Part of the ABC transporter complex HmuTUV involved in hemin import. Responsible for energy coupling to the transport system. The sequence is that of Hemin import ATP-binding protein HmuV from Photobacterium profundum (strain SS9).